Consider the following 315-residue polypeptide: Methionyl-tRNA formyltransferase (315 aa).

Position 113-116 (113-116 (SLLP)) interacts with (6S)-5,6,7,8-tetrahydrofolate.

The protein belongs to the Fmt family.

It catalyses the reaction L-methionyl-tRNA(fMet) + (6R)-10-formyltetrahydrofolate = N-formyl-L-methionyl-tRNA(fMet) + (6S)-5,6,7,8-tetrahydrofolate + H(+). In terms of biological role, attaches a formyl group to the free amino group of methionyl-tRNA(fMet). The formyl group appears to play a dual role in the initiator identity of N-formylmethionyl-tRNA by promoting its recognition by IF2 and preventing the misappropriation of this tRNA by the elongation apparatus. The polypeptide is Methionyl-tRNA formyltransferase (Escherichia coli (strain SMS-3-5 / SECEC)).